Consider the following 222-residue polypeptide: MSSTTTDSTELQNLIKLFQNCQTHPRQHFPAKSSAVLVCLYQEQREDKNELRVILTKRSTTLSSHPGEVALPGGKRDQEDKDDIATALREAREEIGLDPSLVTIISVLEPFVNKKGMSVAPVIGFLHDKKAFKQLPNPAEVEEIFDVPLEMFLKDRNRRAEEREHEGERYLLQYFDYYSEDKERSFIIWALTAGILIRVASIVYQRLPEFQERKPSFWNQPN.

The Nudix hydrolase domain maps to 31–175; that stretch reads AKSSAVLVCL…EGERYLLQYF (145 aa). The short motif at 73 to 96 is the Nudix box element; the sequence is GGKRDQEDKDDIATALREAREEIG. Residues E90 and E94 each coordinate Mg(2+). Residues 186 to 204 form a helical membrane-spanning segment; sequence FIIWALTAGILIRVASIVY.

The protein belongs to the Nudix hydrolase family. PCD1 subfamily. It depends on Mn(2+) as a cofactor. Mg(2+) is required as a cofactor. In terms of tissue distribution, expressed in roots, stems and leaves.

It is found in the peroxisome membrane. In terms of biological role, coenzyme A diphosphatase which mediates the cleavage of CoA into 3',5'-ADP from CoA and 4'-phosphopantetheine. Can use malonyl-CoA, hexanoyl-CoA, lauroyl-CoA, myristoyl-CoA and palmitoyl-CoA as substrates, but not isobutyryl-CoA or propionyl-CoA. The sequence is that of Nudix hydrolase 11 (NUDT11) from Arabidopsis thaliana (Mouse-ear cress).